Here is a 186-residue protein sequence, read N- to C-terminus: Elongation factor P (186 aa).

This sequence belongs to the elongation factor P family.

The protein resides in the cytoplasm. The protein operates within protein biosynthesis; polypeptide chain elongation. In terms of biological role, involved in peptide bond synthesis. Stimulates efficient translation and peptide-bond synthesis on native or reconstituted 70S ribosomes in vitro. Probably functions indirectly by altering the affinity of the ribosome for aminoacyl-tRNA, thus increasing their reactivity as acceptors for peptidyl transferase. This chain is Elongation factor P, found in Cupriavidus pinatubonensis (strain JMP 134 / LMG 1197) (Cupriavidus necator (strain JMP 134)).